A 371-amino-acid chain; its full sequence is 4-hydroxy-3-methylbut-2-en-1-yl diphosphate synthase (flavodoxin) (371 aa).

Residues C270, C273, C305, and E312 each contribute to the [4Fe-4S] cluster site.

It belongs to the IspG family. [4Fe-4S] cluster is required as a cofactor.

It carries out the reaction (2E)-4-hydroxy-3-methylbut-2-enyl diphosphate + oxidized [flavodoxin] + H2O + 2 H(+) = 2-C-methyl-D-erythritol 2,4-cyclic diphosphate + reduced [flavodoxin]. It functions in the pathway isoprenoid biosynthesis; isopentenyl diphosphate biosynthesis via DXP pathway; isopentenyl diphosphate from 1-deoxy-D-xylulose 5-phosphate: step 5/6. Functionally, converts 2C-methyl-D-erythritol 2,4-cyclodiphosphate (ME-2,4cPP) into 1-hydroxy-2-methyl-2-(E)-butenyl 4-diphosphate. This chain is 4-hydroxy-3-methylbut-2-en-1-yl diphosphate synthase (flavodoxin), found in Shewanella sediminis (strain HAW-EB3).